Consider the following 263-residue polypeptide: 4-hydroxy-tetrahydrodipicolinate reductase (263 aa).

Residues 8–13 (GACGRM), aspartate 34, 99–101 (GTT), and 125–128 (SPNY) contribute to the NAD(+) site. Histidine 157 (proton donor/acceptor) is an active-site residue. Histidine 158 is a binding site for (S)-2,3,4,5-tetrahydrodipicolinate. Lysine 161 functions as the Proton donor in the catalytic mechanism. 167–168 (GT) serves as a coordination point for (S)-2,3,4,5-tetrahydrodipicolinate.

It belongs to the DapB family.

It is found in the cytoplasm. It carries out the reaction (S)-2,3,4,5-tetrahydrodipicolinate + NAD(+) + H2O = (2S,4S)-4-hydroxy-2,3,4,5-tetrahydrodipicolinate + NADH + H(+). It catalyses the reaction (S)-2,3,4,5-tetrahydrodipicolinate + NADP(+) + H2O = (2S,4S)-4-hydroxy-2,3,4,5-tetrahydrodipicolinate + NADPH + H(+). It functions in the pathway amino-acid biosynthesis; L-lysine biosynthesis via DAP pathway; (S)-tetrahydrodipicolinate from L-aspartate: step 4/4. In terms of biological role, catalyzes the conversion of 4-hydroxy-tetrahydrodipicolinate (HTPA) to tetrahydrodipicolinate. The protein is 4-hydroxy-tetrahydrodipicolinate reductase of Methanosarcina acetivorans (strain ATCC 35395 / DSM 2834 / JCM 12185 / C2A).